The following is a 269-amino-acid chain: Novel plant SNARE 13 (269 aa).

At 1-217 the chain is on the cytoplasmic side; sequence MASNLPMSPQ…IGRQVATDKC (217 aa). Positions 33-94 form a coiled coil; it reads DKIKDSTRQS…KQSMIKELNS (62 aa). Ser-74 carries the phosphoserine modification. In terms of domain architecture, t-SNARE coiled-coil homology spans 146–208; that stretch reads MKRMDETDQA…KKASQLVKEI (63 aa). The helical; Anchor for type IV membrane protein transmembrane segment at 218–238 threads the bilayer; that stretch reads IMGFLFLIVCGVVAIIIVKIV. The Vesicular segment spans residues 239–269; the sequence is NPNNKDIRDIPGLAPPAQSRKLLYLRNQDYM.

Belongs to the novel plant SNARE family.

It is found in the membrane. Functionally, vesicle trafficking protein that functions in the secretory pathway. This is Novel plant SNARE 13 (NPSN13) from Arabidopsis thaliana (Mouse-ear cress).